The primary structure comprises 205 residues: Ephrin-A1 (205 aa).

The signal sequence occupies residues 1-18 (MEFLWAPLLGLCCSLAAA). The Ephrin RBD domain maps to 19–151 (DRHTVFWNSS…RLKVTVSGKI (133 aa)). Residue N26 is glycosylated (N-linked (GlcNAc...) asparagine). 2 disulfides stabilise this stretch: C51–C92 and C80–C140. S182 carries the GPI-anchor amidated serine lipid modification. A propeptide spans 183–205 (AAPRLFPLAWTVLLLPLLLLQTP) (removed in mature form).

It belongs to the ephrin family. Monomer. Homodimer. Forms heterodimers with EPHA2. Binds to the receptor tyrosine kinases EPHA2, EPHA3, EPHA4, EPHA5, EPHA6 and EPHA7. Also binds with low affinity to EPHA1. In terms of processing, undergoes proteolysis by a metalloprotease to give rise to a soluble monomeric form. N-Glycosylation is required for binding to EPHA2 receptor and inducing its internalization. In terms of tissue distribution, brain. Down-regulated in primary glioma tissues compared to the normal tissues. The soluble monomeric form is expressed in the glioblastoma multiforme (GBM) and breast cancer cells (at protein level).

It is found in the cell membrane. It localises to the secreted. Cell surface GPI-bound ligand for Eph receptors, a family of receptor tyrosine kinases which are crucial for migration, repulsion and adhesion during neuronal, vascular and epithelial development. Binds promiscuously Eph receptors residing on adjacent cells, leading to contact-dependent bidirectional signaling into neighboring cells. Plays an important role in angiogenesis and tumor neovascularization. The recruitment of VAV2, VAV3 and PI3-kinase p85 subunit by phosphorylated EPHA2 is critical for EFNA1-induced RAC1 GTPase activation and vascular endothelial cell migration and assembly. Exerts anti-oncogenic effects in tumor cells through activation and down-regulation of EPHA2. Activates EPHA2 by inducing tyrosine phosphorylation which leads to its internalization and degradation. Acts as a negative regulator in the tumorigenesis of gliomas by down-regulating EPHA2 and FAK. Can evoke collapse of embryonic neuronal growth cone and regulates dendritic spine morphogenesis. The chain is Ephrin-A1 (EFNA1) from Homo sapiens (Human).